Consider the following 1404-residue polypeptide: DNA-directed RNA polymerase subunit beta' (1404 aa).

Positions 60, 62, 75, and 78 each coordinate Zn(2+). Mg(2+) is bound by residues aspartate 449, aspartate 451, and aspartate 453. Cysteine 778, cysteine 852, cysteine 859, and cysteine 862 together coordinate Zn(2+). The tract at residues 1381–1404 (DRPLEEEEEEEIPQSIADDSDGDE) is disordered. Residues 1384-1404 (LEEEEEEEIPQSIADDSDGDE) show a composition bias toward acidic residues.

This sequence belongs to the RNA polymerase beta' chain family. The RNAP catalytic core consists of 2 alpha, 1 beta, 1 beta' and 1 omega subunit. When a sigma factor is associated with the core the holoenzyme is formed, which can initiate transcription. Mg(2+) serves as cofactor. The cofactor is Zn(2+).

It carries out the reaction RNA(n) + a ribonucleoside 5'-triphosphate = RNA(n+1) + diphosphate. In terms of biological role, DNA-dependent RNA polymerase catalyzes the transcription of DNA into RNA using the four ribonucleoside triphosphates as substrates. The chain is DNA-directed RNA polymerase subunit beta' from Leptospira borgpetersenii serovar Hardjo-bovis (strain JB197).